An 843-amino-acid polypeptide reads, in one-letter code: Phosphatidylinositol-glycan-specific phospholipase D (843 aa).

Residues 1 to 23 form the signal peptide; the sequence is MSVGRLWSGLLLLLLFFCSRSSS. 5 N-linked (GlcNAc...) asparagine glycosylation sites follow: asparagine 94, asparagine 271, asparagine 292, asparagine 308, and asparagine 322. FG-GAP repeat units follow at residues 368-429, 435-498, 500-560, 564-625, 635-695, 707-773, and 791-843; these read SPSA…GLPP, DKEA…GRLS, SPNI…RNDK, TLDE…SLGR, QREI…GATR, ALFS…TLGD, and QYVL…FSSD. N-linked (GlcNAc...) asparagine glycans are attached at residues asparagine 483, asparagine 502, asparagine 592, asparagine 605, and asparagine 661.

Belongs to the GPLD1 family. In terms of assembly, monomer. In terms of processing, glycosylated.

The protein localises to the secreted. The catalysed reaction is a 6-(alpha-D-glucosaminyl)-1-(1,2-diacyl-sn-glycero-3-phospho)-1D-myo-inositol + H2O = 6-(alpha-D-glucosaminyl)-1D-myo-inositol + a 1,2-diacyl-sn-glycero-3-phosphate + H(+). Its function is as follows. This protein hydrolyzes the inositol phosphate linkage in proteins anchored by phosphatidylinositol glycans (GPI-anchor) thus releasing these proteins from the membrane. This Rattus norvegicus (Rat) protein is Phosphatidylinositol-glycan-specific phospholipase D (Gpld1).